Reading from the N-terminus, the 84-residue chain is MATGTDQVVGLGLVAVSLIIFTYYTAWVILLPFIDSQHVIHKYFLPRAYAVAIPLAAGLLLLLFVGLFISYVMLKTKRVTKKAQ.

The next 2 helical transmembrane spans lie at L11–L31 and Y49–I69.

This sequence belongs to the DPM2 family. Component of the dolichol-phosphate mannose (DPM) synthase complex composed of DPM1, DPM2 and DPM3; in the complex interacts directly with DPM3. Component of the glycosylphosphatidylinositol-N-acetylglucosaminyltransferase (GPI-GnT) complex composed at least by PIGA, PIGC, PIGH, PIGP, PIGQ, PIGY and DPM2. Interacts with PIGA, PIGC and PIGQ.

It localises to the endoplasmic reticulum membrane. It functions in the pathway protein modification; protein glycosylation. Regulates the biosynthesis of dolichol phosphate-mannose. Regulatory subunit of the dolichol-phosphate mannose (DPM) synthase complex; essential for the ER localization and stable expression of DPM1. Part of the glycosylphosphatidylinositol-N-acetylglucosaminyltransferase (GPI-GnT) complex that catalyzes the transfer of N-acetylglucosamine from UDP-N-acetylglucosamine to phosphatidylinositol and participates in the first step of GPI biosynthesis. May act by regulating the GPI-GNT complex. In Homo sapiens (Human), this protein is Dolichol phosphate-mannose biosynthesis regulatory protein.